The primary structure comprises 159 residues: NADH-quinone oxidoreductase subunit B (159 aa).

Cys36, Cys37, Cys102, and Cys132 together coordinate [4Fe-4S] cluster.

Belongs to the complex I 20 kDa subunit family. As to quaternary structure, NDH-1 is composed of 14 different subunits. Subunits NuoB, C, D, E, F, and G constitute the peripheral sector of the complex. [4Fe-4S] cluster serves as cofactor.

Its subcellular location is the cell inner membrane. The catalysed reaction is a quinone + NADH + 5 H(+)(in) = a quinol + NAD(+) + 4 H(+)(out). NDH-1 shuttles electrons from NADH, via FMN and iron-sulfur (Fe-S) centers, to quinones in the respiratory chain. Couples the redox reaction to proton translocation (for every two electrons transferred, four hydrogen ions are translocated across the cytoplasmic membrane), and thus conserves the redox energy in a proton gradient. This Verminephrobacter eiseniae (strain EF01-2) protein is NADH-quinone oxidoreductase subunit B.